The following is a 268-amino-acid chain: Ribosomal RNA small subunit methyltransferase A (268 aa).

Asparagine 18, leucine 20, glycine 45, glutamate 66, aspartate 91, and asparagine 112 together coordinate S-adenosyl-L-methionine.

This sequence belongs to the class I-like SAM-binding methyltransferase superfamily. rRNA adenine N(6)-methyltransferase family. RsmA subfamily.

It localises to the cytoplasm. It catalyses the reaction adenosine(1518)/adenosine(1519) in 16S rRNA + 4 S-adenosyl-L-methionine = N(6)-dimethyladenosine(1518)/N(6)-dimethyladenosine(1519) in 16S rRNA + 4 S-adenosyl-L-homocysteine + 4 H(+). Specifically dimethylates two adjacent adenosines (A1518 and A1519) in the loop of a conserved hairpin near the 3'-end of 16S rRNA in the 30S particle. May play a critical role in biogenesis of 30S subunits. The protein is Ribosomal RNA small subunit methyltransferase A of Shewanella putrefaciens (strain CN-32 / ATCC BAA-453).